Reading from the N-terminus, the 274-residue chain is uncharacterized protein (274 aa).

Positions 1–17 are cleaved as a signal peptide; sequence MKKLLAGFLTLSLALAA. C18 is lipidated: N-palmitoyl cysteine. A lipid anchor (S-diacylglycerol cysteine) is attached at C18. Residues 18–169 form a disordered region; it reads CSNGSDDDSS…DANNGASSAN (152 aa). Residues 25-76 are compositionally biased toward basic and acidic residues; that stretch reads DSSKKDDSSKDNQSSDDKSKDSKNDDKKNNDSDKDKDNNSDSDKNSDSKSDD. Residues 91 to 169 are compositionally biased toward low complexity; the sequence is SDNASGSDSS…DANNGASSAN (79 aa).

The protein localises to the cell membrane. This is an uncharacterized protein from Staphylococcus saprophyticus subsp. saprophyticus (strain ATCC 15305 / DSM 20229 / NCIMB 8711 / NCTC 7292 / S-41).